The primary structure comprises 193 residues: Ion-translocating oxidoreductase complex subunit A (193 aa).

6 helical membrane passes run 5–25 (LLLL…FLGL), 39–59 (IGMG…SYLV), 67–87 (LGIE…VVQF), 102–122 (VLGI…VALL), 134–154 (IIYG…FSAM), and 171–191 (SIAM…TGLV).

It belongs to the NqrDE/RnfAE family. In terms of assembly, the complex is composed of six subunits: RnfA, RnfB, RnfC, RnfD, RnfE and RnfG.

The protein resides in the cell inner membrane. In terms of biological role, part of a membrane-bound complex that couples electron transfer with translocation of ions across the membrane. The protein is Ion-translocating oxidoreductase complex subunit A of Aliivibrio fischeri (strain ATCC 700601 / ES114) (Vibrio fischeri).